A 226-amino-acid polypeptide reads, in one-letter code: EEF1A lysine methyltransferase 1 (226 aa).

Ser2 is subject to N-acetylserine. Residue Ser2 is modified to Phosphoserine.

The protein belongs to the class I-like SAM-binding methyltransferase superfamily. EFM5 family.

The protein resides in the cytoplasm. It carries out the reaction L-lysyl-[protein] + 3 S-adenosyl-L-methionine = N(6),N(6),N(6)-trimethyl-L-lysyl-[protein] + 3 S-adenosyl-L-homocysteine + 3 H(+). In terms of biological role, protein-lysine methyltransferase that selectively catalyzes the trimethylation of EEF1A at 'Lys-79'. The chain is EEF1A lysine methyltransferase 1 from Bos taurus (Bovine).